The chain runs to 283 residues: Pantothenate synthetase (283 aa).

An ATP-binding site is contributed by 31–38 (MGALHDGH). Histidine 38 (proton donor) is an active-site residue. (R)-pantoate is bound at residue glutamine 62. A beta-alanine-binding site is contributed by glutamine 62. Residue 148–151 (GKKD) coordinates ATP. Glutamine 154 lines the (R)-pantoate pocket. ATP is bound by residues valine 177 and 185–188 (KSSR).

This sequence belongs to the pantothenate synthetase family. Homodimer.

Its subcellular location is the cytoplasm. The enzyme catalyses (R)-pantoate + beta-alanine + ATP = (R)-pantothenate + AMP + diphosphate + H(+). It participates in cofactor biosynthesis; (R)-pantothenate biosynthesis; (R)-pantothenate from (R)-pantoate and beta-alanine: step 1/1. Functionally, catalyzes the condensation of pantoate with beta-alanine in an ATP-dependent reaction via a pantoyl-adenylate intermediate. In Staphylococcus aureus (strain MRSA252), this protein is Pantothenate synthetase.